The chain runs to 247 residues: 2,3-bisphosphoglycerate-dependent phosphoglycerate mutase (247 aa).

Substrate contacts are provided by residues Arg7–Asn14, Thr20–Gly21, Arg59, Glu86–Tyr89, Lys97, Arg113–Arg114, and Gly182–Asn183. The active-site Tele-phosphohistidine intermediate is His8. Residue Glu86 is the Proton donor/acceptor of the active site.

It belongs to the phosphoglycerate mutase family. BPG-dependent PGAM subfamily.

It carries out the reaction (2R)-2-phosphoglycerate = (2R)-3-phosphoglycerate. Its pathway is carbohydrate degradation; glycolysis; pyruvate from D-glyceraldehyde 3-phosphate: step 3/5. Its function is as follows. Catalyzes the interconversion of 2-phosphoglycerate and 3-phosphoglycerate. In Treponema denticola (strain ATCC 35405 / DSM 14222 / CIP 103919 / JCM 8153 / KCTC 15104), this protein is 2,3-bisphosphoglycerate-dependent phosphoglycerate mutase.